Reading from the N-terminus, the 444-residue chain is MAKKYFGTDGVRGEVGQFPITPDFVLKLGYAAGQVLVQHDTDQKPTVLIGKDTRISGYMLEAALVAGFTAAGVNVVQTGPLPTPGVAYLTRALRLSAGVMISASHNAYSDNGIKFFAEGGVKLSDEVELEIEAKIDGEMKTQPSARLGRARRISGADDRYIEFCKSTFPSHSDLRGLKLVVDTANGAGYGVAPKVFHELGAQVVSIGNEPNGYNINEKCGATYTKTLQAAVLQHEADYGIALDGDGDRLMMVDKNGQVYDGDSLIYVIAKARAREGINIGGVVGTVMTNMAMEIALKEQGVDFCRAKVGDRYVLEQLNQRGWLIGGEASGHILCMDKHNTGDGIISALQVLAALQTLNQDLATVCADWQPYPQTMINVRIQKGQQWQEASKDVLAEVEKELEGKGRVVLRASGTEPVVRVMVEARQADWAREGAERIAAAIGGI.

The active-site Phosphoserine intermediate is the Ser-104. Mg(2+) is bound by residues Ser-104, Asp-243, Asp-245, and Asp-247. Phosphoserine is present on Ser-104.

The protein belongs to the phosphohexose mutase family. The cofactor is Mg(2+). In terms of processing, activated by phosphorylation.

The catalysed reaction is alpha-D-glucosamine 1-phosphate = D-glucosamine 6-phosphate. Its function is as follows. Catalyzes the conversion of glucosamine-6-phosphate to glucosamine-1-phosphate. This chain is Phosphoglucosamine mutase, found in Neisseria meningitidis serogroup B (strain ATCC BAA-335 / MC58).